The following is a 1203-amino-acid chain: Regulator of telomere elongation helicase 1 (1203 aa).

Positions 7–296 (NGVTVDFPFQ…ARVTQQGELQ (290 aa)) constitute a Helicase ATP-binding domain. An ATP-binding site is contributed by 42-49 (SPTGTGKT). [4Fe-4S] cluster-binding residues include Cys145, Cys163, Cys172, and Cys207. The Nuclear localization signal signature appears at 151 to 167 (KKQESNHMQISLCRKKV). The DEAH box signature appears at 250–253 (DEAH). The Nuclear localization signal signature appears at 871–877 (QKGGRKK). Disordered regions lie at residues 998-1020 (QLDP…TSKG) and 1120-1203 (TTGK…RSKQ). Residues 1004–1020 (HLNQGQPHLSAHPTSKG) show a composition bias toward polar residues. A compositionally biased stretch (basic and acidic residues) spans 1123 to 1134 (KDLELEGPRDES). A PIP-box motif is present at residues 1160–1167 (QSKISSFF). The segment covering 1169–1181 (QRPDESVRSDDTT) has biased composition (basic and acidic residues).

This sequence belongs to the helicase family. RAD3/XPD subfamily. In terms of assembly, interacts with TERF1. Interacts (via PIP-box) with PCNA; the interaction is direct and essential for suppressing telomere fragility. Interacts with MMS19; the interaction mediates the association of RTEL1 with the cytosolic iron-sulfur protein assembly (CIA) complex. In terms of tissue distribution, widely expressed. Expressed in spleen, thymus, Peyer patches, kidney, and intestine. Not expressed in brain, heart, lung, skeletal muscles, skin and white fat. In the adult gonad, it is highly expressed in the testis, mainly in the spermatogonia and meiotic spermatocytes.

The protein localises to the nucleus. It catalyses the reaction ATP + H2O = ADP + phosphate + H(+). Functionally, a probable ATP-dependent DNA helicase implicated in telomere-length regulation, DNA repair and the maintenance of genomic stability. Acts as an anti-recombinase to counteract toxic recombination and limit crossover during meiosis. Regulates meiotic recombination and crossover homeostasis by physically dissociating strand invasion events and thereby promotes noncrossover repair by meiotic synthesis dependent strand annealing (SDSA) as well as disassembly of D loop recombination intermediates. Also disassembles T loops and prevents telomere fragility by counteracting telomeric G4-DNA structures, which together ensure the dynamics and stability of the telomere. The sequence is that of Regulator of telomere elongation helicase 1 from Mus musculus (Mouse).